Consider the following 366-residue polypeptide: Zinc finger protein ubi-d4 B (366 aa).

2 disordered regions span residues 41-94 and 140-167; these read ASAP…DGSS and DDLDDEDYEEDTPKRRKGKSKGKGIGGA. A compositionally biased stretch (basic and acidic residues) spans 76 to 86; that stretch reads PDPEQMLKKEG. Residues 140–149 show a composition bias toward acidic residues; that stretch reads DDLDDEDYEE. The segment at 183-206 adopts a C2H2-type zinc-finger fold; the sequence is YACDICGKRYKNRPGLSYHYAHSH. Positions 211-243 are disordered; sequence EGAGAEDKEDSQPPTPIMHRSEEQKSKKGPDGL. The span at 229 to 240 shows a compositional bias: basic and acidic residues; it reads HRSEEQKSKKGP. 2 consecutive PHD-type zinc fingers follow at residues 247–307 and 304–354; these read NNYC…CKCC and CKCC…CLDL.

Belongs to the requiem/DPF family.

It is found in the cytoplasm. It localises to the nucleus. In terms of biological role, may be a transcription factor required for the apoptosis response following survival factor withdrawal from myeloid cells. Might also have a role in the development and maturation of lymphoid cells. This chain is Zinc finger protein ubi-d4 B (req-b), found in Xenopus laevis (African clawed frog).